Consider the following 920-residue polypeptide: Nonribosomal peptide synthetase atrA (920 aa).

Positions 13–428 (AAAQERCGRV…AGRLKETMII (416 aa)) are adenylation (A) domain. One can recognise a Carrier domain in the interval 558–637 (PPKDELERSL…ELSAALHDLQ (80 aa)). Position 595 is an O-(pantetheine 4'-phosphoryl)serine (Ser-595). The segment at 656–905 (PLWLIHPGVG…YTMLAPEHVF (250 aa)) is thioesterase (TE) domain.

This sequence belongs to the NRP synthetase family.

The enzyme catalyses 2 3-(4-hydroxyphenyl)pyruvate + 2 ATP = atromentin + 2 AMP + 2 diphosphate + H(+). Nonribosomal peptide synthetase that mediates the biosynthesis of atromentin. AtrA first activates 4-hydroxyphenylpyruvate (HPPA) through its A domain to AMP-HPPA. The HPPA unit is then loaded to the T domain and eventually transferred to the TE domain. Another HPPA unit is then loaded onto the T domain. The TE domain then catalyzes the condensation of the two HPPA units and the release of atromentin via cyclization. This is Nonribosomal peptide synthetase atrA from Aspergillus terreus (strain NIH 2624 / FGSC A1156).